We begin with the raw amino-acid sequence, 222 residues long: Arginine ABC transporter permease protein ArtM (222 aa).

At 1–15 (MFEYLPELMKGLHTS) the chain is on the periplasmic side. Positions 12–208 (LHTSLTLTVA…VVNGLLTLMM (197 aa)) constitute an ABC transmembrane type-1 domain. The helical transmembrane segment at 16 to 36 (LTLTVASLIVALILALIFTII) threads the bilayer. Topologically, residues 37–49 (LTLKTPVLVWLVR) are cytoplasmic. A helical membrane pass occupies residues 50–70 (GYITLFTGTPLLVQIFLIYYG). Topologically, residues 71-79 (PGQFPTLQE) are periplasmic. A helical transmembrane segment spans residues 80–100 (YPALWHLLSEPWLCALIALSL). The Cytoplasmic segment spans residues 101-154 (NSAAYTTQLFYGAIRAIPEGQWQSCSALGMSKKDTLAILLPYAFKRSLSSYSNE). The chain crosses the membrane as a helical span at residues 155-175 (VVLVFKSTSLAYTITLMEVMG). The Periplasmic portion of the chain corresponds to 176-186 (YSQLLYGRTYD). The chain crosses the membrane as a helical span at residues 187–207 (VMVFGAAGIIYLVVNGLLTLM). The Cytoplasmic portion of the chain corresponds to 208 to 222 (MRLIERKALAFERRN).

The protein belongs to the binding-protein-dependent transport system permease family. HisMQ subfamily. The complex is composed of two ATP-binding proteins (ArtP), two transmembrane proteins (ArtM and ArtQ) and two solute-binding proteins (ArtJ and ArtI).

It localises to the cell inner membrane. Part of the ABC transporter complex ArtPIQMJ involved in arginine transport. Probably responsible for the translocation of the substrate across the membrane. This chain is Arginine ABC transporter permease protein ArtM (artM), found in Escherichia coli (strain K12).